Consider the following 196-residue polypeptide: Large ribosomal subunit protein eL15 (196 aa).

The segment at 156–196 (HRGRAERGKTSAGRKGRGMRTRGRGTEKTRPSIRSHANQGK) is disordered. Residues 167–178 (AGRKGRGMRTRG) show a composition bias toward basic residues.

This sequence belongs to the eukaryotic ribosomal protein eL15 family.

This Methanoregula boonei (strain DSM 21154 / JCM 14090 / 6A8) protein is Large ribosomal subunit protein eL15.